The sequence spans 260 residues: Proliferating cell nuclear antigen (260 aa).

Residues 61–80 (RCDRNLSMGMNLGSMAKILK) mediate DNA binding.

It belongs to the PCNA family. As to quaternary structure, homotrimer. Forms a complex with activator 1 heteropentamer in the presence of ATP. Interacts with E2f. Interacts with the catalytic subunits of two DNA polymerase complexes: PolD1 from the delta complex and PolE1/DNApol-epsilon255 from the epsilon complex. In terms of tissue distribution, expressed at high levels in adult ovary.

Its subcellular location is the nucleus. The protein resides in the chromosome. It is found in the cytoplasm. Functionally, likely to be an auxiliary protein of DNA polymerase delta complex and is probably involved in the control of DNA replication and repair by increasing the polymerase's processibility. In Drosophila melanogaster (Fruit fly), this protein is Proliferating cell nuclear antigen.